The chain runs to 468 residues: tRNA (guanine(37)-N(1))-methyltransferase 1 (468 aa).

S-adenosyl-L-methionine-binding positions include histidine 207, 245–246, and 273–274; these read DL and DA. The interval 301–348 is disordered; the sequence is KEAAVSRGGETNSSGEEIRESNASINEPLGANKKPSGTTKTENGVGKD. The span at 309–325 shows a compositional bias: polar residues; it reads GETNSSGEEIRESNASI. Asparagine 380 contacts S-adenosyl-L-methionine.

Belongs to the class I-like SAM-binding methyltransferase superfamily. TRM5/TYW2 family. As to quaternary structure, monomer.

The protein resides in the mitochondrion matrix. It is found in the nucleus. Its subcellular location is the cytoplasm. The catalysed reaction is guanosine(37) in tRNA + S-adenosyl-L-methionine = N(1)-methylguanosine(37) in tRNA + S-adenosyl-L-homocysteine + H(+). Functionally, specifically methylates the N1 position of guanosine-37 in various cytoplasmic and mitochondrial tRNAs. Methylation is not dependent on the nature of the nucleoside 5' of the target nucleoside. This is the first step in the biosynthesis of wybutosine (yW), a modified base adjacent to the anticodon of tRNAs and required for accurate decoding. The protein is tRNA (guanine(37)-N(1))-methyltransferase 1 of Arabidopsis thaliana (Mouse-ear cress).